We begin with the raw amino-acid sequence, 309 residues long: SUR7 family protein FMP45 (309 aa).

The Cytoplasmic portion of the chain corresponds to 1 to 5 (MIFKR). A helical membrane pass occupies residues 6–26 (FVNLLVFLFLLGAGLLTFFLI). Residues 27–116 (LSGGRESGTL…YYLSRVGWAM (90 aa)) lie on the Extracellular side of the membrane. Residue asparagine 73 is glycosylated (N-linked (GlcNAc...) asparagine). Residues 117–137 (LLISLFFIVLALVPGFLATFL) form a helical membrane-spanning segment. Over 138 to 140 (PFK) the chain is Cytoplasmic. Residues 141–161 (AVPVLYCVLSWLAFFFIILAA) traverse the membrane as a helical segment. Residues 162-188 (CLYTGCYVKARKTFRNSGRSARLGPKN) lie on the Extracellular side of the membrane. A helical membrane pass occupies residues 189–209 (FAFIWTSVFLMLVNAIWSTIF). Residues 210–309 (SATHKAHSTY…GLAGPVTVRD (100 aa)) are Cytoplasmic-facing. Residues serine 230 and serine 232 each carry the phosphoserine modification. Threonine 235 bears the Phosphothreonine mark. A disordered region spans residues 253 to 309 (GPITAAPVVGQPQPTTTTTPAGNGKFFQKLKTRKQVPSAELEPAGDGGLAGPVTVRD). Residues 258–274 (APVVGQPQPTTTTTPAG) show a composition bias toward low complexity.

The protein belongs to the SUR7 family.

Its subcellular location is the cell membrane. In terms of biological role, involved in sporulation and affects the sphingolipid composition of the plasma membrane. The protein is SUR7 family protein FMP45 (FMP45) of Saccharomyces cerevisiae (strain ATCC 204508 / S288c) (Baker's yeast).